Here is a 209-residue protein sequence, read N- to C-terminus: Imidazole glycerol phosphate synthase subunit HisH (209 aa).

The Glutamine amidotransferase type-1 domain maps to Met1–Ser205. The active-site Nucleophile is Cys79. Catalysis depends on residues His180 and Glu182.

As to quaternary structure, heterodimer of HisH and HisF.

It localises to the cytoplasm. The catalysed reaction is 5-[(5-phospho-1-deoxy-D-ribulos-1-ylimino)methylamino]-1-(5-phospho-beta-D-ribosyl)imidazole-4-carboxamide + L-glutamine = D-erythro-1-(imidazol-4-yl)glycerol 3-phosphate + 5-amino-1-(5-phospho-beta-D-ribosyl)imidazole-4-carboxamide + L-glutamate + H(+). It carries out the reaction L-glutamine + H2O = L-glutamate + NH4(+). It functions in the pathway amino-acid biosynthesis; L-histidine biosynthesis; L-histidine from 5-phospho-alpha-D-ribose 1-diphosphate: step 5/9. IGPS catalyzes the conversion of PRFAR and glutamine to IGP, AICAR and glutamate. The HisH subunit catalyzes the hydrolysis of glutamine to glutamate and ammonia as part of the synthesis of IGP and AICAR. The resulting ammonia molecule is channeled to the active site of HisF. In Bacillus cereus (strain AH187), this protein is Imidazole glycerol phosphate synthase subunit HisH.